We begin with the raw amino-acid sequence, 961 residues long: IQ motif and SEC7 domain-containing protein 1 (961 aa).

Residues 21–113 (SGVEGEAPSS…SLSESYELSS (93 aa)) are disordered. Positions 29–38 (SSETGTSLDS) are enriched in polar residues. 3 positions are modified to phosphoserine: Ser88, Ser104, and Ser106. One can recognise an IQ domain in the interval 133 to 162 (TRHAARTIQTAFRQYQMNKNFERLRSSMSE). 3 positions are modified to phosphoserine: Ser179, Ser247, and Ser251. Disordered stretches follow at residues 263 to 291 (SEEVPASDTARARDTEPKPGLHGMDHRKL), 310 to 332 (LSPPLPLSQAGDRPSSTESDLRL), and 347 to 515 (KEDK…DSPA). Positions 272–291 (ARARDTEPKPGLHGMDHRKL) are enriched in basic and acidic residues. 2 stretches are compositionally biased toward basic and acidic residues: residues 364 to 374 (ERPEPRLRVEH) and 428 to 444 (LPREEPELRPRPPRPLE). A compositionally biased stretch (low complexity) spans 469–487 (DSINSTSNSNDTINCSSES). A phosphoserine mark is found at Ser510 and Ser513. The 194-residue stretch at 515-708 (AFSNDVIRKR…IGIYERIRKR (194 aa)) folds into the SEC7 domain. The region spanning 772-864 (HQREIFLFND…LRESVAEVQE (93 aa)) is the PH domain. Residues 846-877 (QDRKKFTDDLRESVAEVQEMEKHRIESELEKQ) adopt a coiled-coil conformation. Ser890 is subject to Phosphoserine. Position 909 is a phosphotyrosine (Tyr909). The tract at residues 920 to 961 (LSSSLRDLSEAGKRGRRSSAGSLESNVEFQPFQPPQPPVLCS) is disordered. A phosphoserine mark is found at Ser922 and Ser923. The span at 938–947 (SAGSLESNVE) shows a compositional bias: polar residues. The segment covering 951 to 961 (FQPPQPPVLCS) has biased composition (pro residues).

This sequence belongs to the BRAG family. As to quaternary structure, interacts with ARF1 and ARF6. Interacts with GRIA2; the interaction is required for ARF6 activation. As to expression, expressed in hippocampus.

It localises to the cytoplasm. Its subcellular location is the nucleus. The protein localises to the postsynaptic density. It is found in the cytoplasmic vesicle. The protein resides in the secretory vesicle. It localises to the synaptic vesicle. Its function is as follows. Guanine nucleotide exchange factor for ARF1 and ARF6. Guanine nucleotide exchange factor activity is enhanced by lipid binding. Accelerates GTP binding by ARFs of all three classes. Guanine nucleotide exchange protein for ARF6, mediating internalization of beta-1 integrin. Involved in neuronal development. In neurons, plays a role in the control of vesicle formation by endocytoc cargo. Upon long term depression, interacts with GRIA2 and mediates the activation of ARF6 to internalize synaptic AMPAR receptors. This Mus musculus (Mouse) protein is IQ motif and SEC7 domain-containing protein 1 (Iqsec1).